Reading from the N-terminus, the 78-residue chain is Large ribosomal subunit protein eL20 (78 aa).

Belongs to the eukaryotic ribosomal protein eL20 family. As to quaternary structure, part of the 50S ribosomal subunit. Binds 23S rRNA.

This chain is Large ribosomal subunit protein eL20, found in Methanothermobacter thermautotrophicus (strain ATCC 29096 / DSM 1053 / JCM 10044 / NBRC 100330 / Delta H) (Methanobacterium thermoautotrophicum).